Here is an 85-residue protein sequence, read N- to C-terminus: Large ribosomal subunit protein bL27 (85 aa).

The interval 1-24 (MAHKKGQGSSRNGRDSNAQRRGVK) is disordered.

Belongs to the bacterial ribosomal protein bL27 family.

In Syntrophus aciditrophicus (strain SB), this protein is Large ribosomal subunit protein bL27.